The chain runs to 176 residues: ATP-dependent protease subunit HslV (176 aa).

Threonine 5 is a catalytic residue. Na(+) is bound by residues serine 161, cysteine 164, and threonine 167.

This sequence belongs to the peptidase T1B family. HslV subfamily. In terms of assembly, a double ring-shaped homohexamer of HslV is capped on each side by a ring-shaped HslU homohexamer. The assembly of the HslU/HslV complex is dependent on binding of ATP.

It is found in the cytoplasm. The catalysed reaction is ATP-dependent cleavage of peptide bonds with broad specificity.. Allosterically activated by HslU binding. Protease subunit of a proteasome-like degradation complex believed to be a general protein degrading machinery. The sequence is that of ATP-dependent protease subunit HslV from Thermoanaerobacter pseudethanolicus (strain ATCC 33223 / 39E) (Clostridium thermohydrosulfuricum).